A 460-amino-acid chain; its full sequence is MSRTLTSRQAEELHKSIIAYLAANNLQDSANAMRTELGLGEDAFDTATAKKYETLLEKKWTSVVRLQKKIMDLEAQTQTLQTELNSATPTSNRRGDPSSWLPAGPPRHVLQSHRTPINCVAFHPIFSSIASGDEDATIKIWDWEFGELERTVKGHTKAVLDLDYGGPKGHTLLASCSSDLTIKLWDPANEYQNIRTLPGHDHSVSAVRFIPSGAPGAPLSGNLLASASRDVTVRIWDVTTGYCVKTIRGHADWIRDVSPSLDGKYLLSTGNDRTVRLWDISVPNPEAKLVMIGHEHFVECCTFAPPAAYSHLATLAGVKKPPPASSTAEFMATGGRDKTIRLWDGRGNCIKTLIGHDNWVRGLVFHPSGKFLLSVSDDKTIRCWDLSQEGKCVKTVEGSHEHFITSLRWAPPIIKDKGPGEETNGDVGTPKKAATAPQDVQIRCVIATGSVDMSLRIFSR.

Positions 9-41 (QAEELHKSIIAYLAANNLQDSANAMRTELGLGE) constitute a LisH domain. The stretch at 61-88 (TSVVRLQKKIMDLEAQTQTLQTELNSAT) forms a coiled coil. A compositionally biased stretch (polar residues) spans 82–92 (TELNSATPTSN). Residues 82–105 (TELNSATPTSNRRGDPSSWLPAGP) are disordered. WD repeat units lie at residues 112–153 (SHRT…RTVK), 155–195 (HTKA…QNIR), 199–246 (GHDH…CVKT), 249–288 (GHADWIRDVSPSLDGKYLLSTGNDRTVRLWDISVPNPEAK), 293–354 (GHEH…KTLI), 355–394 (GHDNWVRGLVFHPSGKFLLSVSDDKTIRCWDLSQEGKCVK), and 399–456 (SHEH…MSLR). The tract at residues 414–433 (IKDKGPGEETNGDVGTPKKA) is disordered.

The protein belongs to the WD repeat LIS1/nudF family. In terms of assembly, self-associates. Interacts with NDL1 and dynein.

The protein resides in the cytoplasm. It localises to the cytoskeleton. The protein localises to the spindle pole. In terms of biological role, positively regulates the activity of the minus-end directed microtubule motor protein dynein. May enhance dynein-mediated microtubule sliding by targeting dynein to the microtubule plus end. Required for nuclear migration during vegetative growth as well as development. Required for retrograde early endosome (EE) transport from the hyphal tip. Required for localization of dynein to the mitotic spindle poles. Recruits additional proteins to the dynein complex at SPBs. This is Nuclear distribution protein PAC1 from Gibberella zeae (strain ATCC MYA-4620 / CBS 123657 / FGSC 9075 / NRRL 31084 / PH-1) (Wheat head blight fungus).